Consider the following 211-residue polypeptide: Putative truncated flagellar export/assembly protein LafU (211 aa).

Residues 58-176 (LRVLIKDDQN…RIEIMVLTKS (119 aa)) enclose the OmpA-like domain.

This sequence belongs to the MotB family.

This chain is Putative truncated flagellar export/assembly protein LafU, found in Escherichia coli (strain K12).